Here is a 412-residue protein sequence, read N- to C-terminus: Maltoporin (412 aa).

Residues 1–22 form the signal peptide; that stretch reads MKKVSVIAAAVAATLAAGSAFA.

The protein belongs to the porin LamB (TC 1.B.3) family. As to quaternary structure, homotrimer formed of three 18-stranded antiparallel beta-barrels, containing three independent channels.

The protein localises to the cell outer membrane. It catalyses the reaction beta-maltose(in) = beta-maltose(out). Functionally, involved in the transport of maltose and maltodextrins. The protein is Maltoporin of Vibrio cholerae serotype O1 (strain ATCC 39315 / El Tor Inaba N16961).